Here is a 206-residue protein sequence, read N- to C-terminus: Dephospho-CoA kinase (206 aa).

Residues 4 to 204 form the DPCK domain; it reads IVGLTGGIGS…HQYLQLANAQ (201 aa). 12-17 is an ATP binding site; sequence GSGKST.

This sequence belongs to the CoaE family.

Its subcellular location is the cytoplasm. It carries out the reaction 3'-dephospho-CoA + ATP = ADP + CoA + H(+). Its pathway is cofactor biosynthesis; coenzyme A biosynthesis; CoA from (R)-pantothenate: step 5/5. Its function is as follows. Catalyzes the phosphorylation of the 3'-hydroxyl group of dephosphocoenzyme A to form coenzyme A. The protein is Dephospho-CoA kinase of Pasteurella multocida (strain Pm70).